Reading from the N-terminus, the 521-residue chain is Cytochrome P450 monooxygenase astF (521 aa).

The chain crosses the membrane as a helical span at residues 14 to 34 (TMATFLLPVAIGTIILLFLYG). Residues Asn-198, Asn-218, Asn-268, and Asn-281 are each glycosylated (N-linked (GlcNAc...) asparagine). Residue Cys-430 coordinates heme.

It belongs to the cytochrome P450 family. Heme is required as a cofactor.

It localises to the membrane. The protein operates within secondary metabolite biosynthesis; terpenoid biosynthesis. Cytochrome P450 monooxygenase; part of the gene cluster that mediates the biosynthesis of astellolides, drimane-type sesquiterpene esters that show antimicrobial, anti-inflammatory, and anti-tumor activities. The first step in astellolide biosynthesis is performed by the sesquiterpene cyclase astC that catalyzes the formation of drimanyl pyrophosphate from farnesyl pyrophosphate. Drimanyl pyrophosphate is then dephosphorylated by the sesquiterpene phosphatase astI to produce drimanyl monophosphate which is further dephosphorylated to drim-8-ene-11-ol by atsK. Drim-8-ene-11-ol is converted to confertifolin, probably by the cytochrome P450 monooxygenase astD and/or the dehydrogenase astE. The cytochrome P450 monooxygenases astB, astF and astJ then hydroxylate confertifolin at C6, C14, or C15 to form trihydroxy confertifolin. The nonribosomal peptide synthetase astA catalyzes ester bond formation between trihydroxy contifolin and benzoic acid (BA) or 4-hydroxy benzoic acid (4HBA), leading to the formation of dideacetyl astellolides A and B, respectively. Finally, the O-acetyltransferase astG converts dideacetyl astellolides A and B into deacetyl astellolides A and B. The polypeptide is Cytochrome P450 monooxygenase astF (Aspergillus oryzae (strain ATCC 42149 / RIB 40) (Yellow koji mold)).